We begin with the raw amino-acid sequence, 130 residues long: Small ribosomal subunit protein uS9 (130 aa).

The tract at residues 105 to 130 is disordered; that stretch reads TRDARMKERKKPGLKKARKASQFSKR. Positions 111–130 are enriched in basic residues; sequence KERKKPGLKKARKASQFSKR.

It belongs to the universal ribosomal protein uS9 family.

This Lactiplantibacillus plantarum (strain ATCC BAA-793 / NCIMB 8826 / WCFS1) (Lactobacillus plantarum) protein is Small ribosomal subunit protein uS9.